A 450-amino-acid polypeptide reads, in one-letter code: Glutamyl-tRNA reductase (450 aa).

Substrate contacts are provided by residues 45–48, S107, 112–114, and Q118; these read TCNR and ERE. C46 (nucleophile) is an active-site residue. Residue 196–201 coordinates NADP(+); it reads GTGAYA.

This sequence belongs to the glutamyl-tRNA reductase family. As to quaternary structure, homodimer.

It catalyses the reaction (S)-4-amino-5-oxopentanoate + tRNA(Glu) + NADP(+) = L-glutamyl-tRNA(Glu) + NADPH + H(+). The protein operates within porphyrin-containing compound metabolism; protoporphyrin-IX biosynthesis; 5-aminolevulinate from L-glutamyl-tRNA(Glu): step 1/2. Its function is as follows. Catalyzes the NADPH-dependent reduction of glutamyl-tRNA(Glu) to glutamate 1-semialdehyde (GSA). In Micrococcus luteus (strain ATCC 4698 / DSM 20030 / JCM 1464 / CCM 169 / CCUG 5858 / IAM 1056 / NBRC 3333 / NCIMB 9278 / NCTC 2665 / VKM Ac-2230) (Micrococcus lysodeikticus), this protein is Glutamyl-tRNA reductase.